The following is a 713-amino-acid chain: Mitochondrial intermediate peptidase (713 aa).

The N-terminal 35 residues, M1–R35, are a transit peptide targeting the mitochondrion. K126 carries the N6-acetyllysine modification. A Zn(2+)-binding site is contributed by H495. E496 is an active-site residue. Residues H499 and H502 each contribute to the Zn(2+) site.

Belongs to the peptidase M3 family. Monomer. Requires Zn(2+) as cofactor.

It is found in the mitochondrion matrix. It catalyses the reaction Release of an N-terminal octapeptide as second stage of processing of some proteins imported into the mitochondrion.. With respect to regulation, activity is divalent cation-dependent. It is stimulated by manganese, magnesium or calcium ions and reversibly inhibited by zinc, cobalt and iron. Functionally, cleaves proteins, imported into the mitochondrion, to their mature size. The chain is Mitochondrial intermediate peptidase (MIPEP) from Homo sapiens (Human).